A 449-amino-acid chain; its full sequence is Interferon-related developmental regulator 1 (449 aa).

The segment covering 1-10 (MPKNKKRNAP) has biased composition (basic residues). The segment at 1–41 (MPKNKKRNAPHRGGGGGGGSGAATSAATTGGPHRTVQPFSD) is disordered. Residues 12–21 (RGGGGGGGSG) show a composition bias toward gly residues. The segment covering 22-31 (AATSAATTGG) has biased composition (low complexity).

Belongs to the IFRD family. In terms of assembly, interacts with PSIP1/LEDGF. As to expression, expressed at high levels in the embryonic brain in the period related to neuroblast proliferation and differentiation.

It is found in the cytoplasm. The protein resides in the cell membrane. The protein localises to the nucleus. In terms of biological role, probably participates in neurogenesis. Could play a role in regulating gene activity in the proliferative and/or differentiative pathways induced by NGF. This is Interferon-related developmental regulator 1 (Ifrd1) from Rattus norvegicus (Rat).